A 343-amino-acid polypeptide reads, in one-letter code: Probable transcription factor MYB58 (343 aa).

The disordered stretch occupies residues 1 to 30; the sequence is MARAPGGVRRRSGRRGAGGGGAGGGGEALR. The segment covering 15-27 has biased composition (gly residues); that stretch reads RGAGGGGAGGGGE. HTH myb-type domains follow at residues 26–78 and 79–134; these read GEAL…VNKL and RPNL…KRLA. 2 DNA-binding regions (H-T-H motif) span residues 54-77 and 107-130; these read WSSI…WVNK and WARI…STRQ. Disordered stretches follow at residues 137 to 169, 219 to 238, and 307 to 343; these read LRGP…TATF, PPAD…PPPL, and DDLP…DDVL. A compositionally biased stretch (polar residues) spans 157–169; it reads PSSSSLDSQTATF. Residues 320-336 are compositionally biased toward pro residues; sequence QPPPPPPPPPPPSPSPS.

The protein resides in the nucleus. Probable transcription factor. The protein is Probable transcription factor MYB58 of Oryza sativa subsp. japonica (Rice).